A 153-amino-acid chain; its full sequence is Xanthine-guanine phosphoribosyltransferase (153 aa).

Residues 37-38 (RG), arginine 69, and 88-96 (DDLVDTGGT) each bind 5-phospho-alpha-D-ribose 1-diphosphate. Arginine 69 serves as a coordination point for GMP. Aspartate 89 is a Mg(2+) binding site. Residues aspartate 92 and isoleucine 135 each coordinate guanine. Residues aspartate 92 and isoleucine 135 each coordinate xanthine. GMP is bound by residues 92 to 96 (DTGGT) and 134 to 135 (WI).

The protein belongs to the purine/pyrimidine phosphoribosyltransferase family. XGPT subfamily. As to quaternary structure, homotetramer. Requires Mg(2+) as cofactor.

The protein resides in the cell membrane. It catalyses the reaction GMP + diphosphate = guanine + 5-phospho-alpha-D-ribose 1-diphosphate. It carries out the reaction XMP + diphosphate = xanthine + 5-phospho-alpha-D-ribose 1-diphosphate. The enzyme catalyses IMP + diphosphate = hypoxanthine + 5-phospho-alpha-D-ribose 1-diphosphate. It functions in the pathway purine metabolism; GMP biosynthesis via salvage pathway; GMP from guanine: step 1/1. The protein operates within purine metabolism; XMP biosynthesis via salvage pathway; XMP from xanthine: step 1/1. Functionally, purine salvage pathway enzyme that catalyzes the transfer of the ribosyl-5-phosphate group from 5-phospho-alpha-D-ribose 1-diphosphate (PRPP) to the N9 position of the 6-oxopurines guanine and xanthine to form the corresponding ribonucleotides GMP (guanosine 5'-monophosphate) and XMP (xanthosine 5'-monophosphate), with the release of PPi. To a lesser extent, also acts on hypoxanthine. This Buchnera aphidicola subsp. Baizongia pistaciae (strain Bp) protein is Xanthine-guanine phosphoribosyltransferase.